The following is a 431-amino-acid chain: Adenylosuccinate synthetase (431 aa).

GTP contacts are provided by residues 12–18 (GDEGKGK) and 40–42 (GHT). The Proton acceptor role is filled by aspartate 13. Residues aspartate 13 and glycine 40 each coordinate Mg(2+). IMP contacts are provided by residues 13–16 (DEGK), 38–41 (NAGH), threonine 131, arginine 145, glutamine 225, threonine 240, and arginine 304. Histidine 41 serves as the catalytic Proton donor. 300-306 (VNTGRPR) provides a ligand contact to substrate. GTP is bound by residues arginine 306, 332–334 (KLD), and 414–416 (STS).

It belongs to the adenylosuccinate synthetase family. In terms of assembly, homodimer. It depends on Mg(2+) as a cofactor.

Its subcellular location is the cytoplasm. The catalysed reaction is IMP + L-aspartate + GTP = N(6)-(1,2-dicarboxyethyl)-AMP + GDP + phosphate + 2 H(+). It functions in the pathway purine metabolism; AMP biosynthesis via de novo pathway; AMP from IMP: step 1/2. In terms of biological role, plays an important role in the de novo pathway of purine nucleotide biosynthesis. Catalyzes the first committed step in the biosynthesis of AMP from IMP. The sequence is that of Adenylosuccinate synthetase from Rhizobium rhizogenes (strain K84 / ATCC BAA-868) (Agrobacterium radiobacter).